Reading from the N-terminus, the 343-residue chain is L-threonine 3-dehydrogenase (343 aa).

Position 40 (cysteine 40) interacts with Zn(2+). Residues threonine 42 and histidine 45 each act as charge relay system in the active site. The Zn(2+) site is built by histidine 65, glutamate 66, cysteine 95, cysteine 98, cysteine 101, and cysteine 109. Residues isoleucine 177, aspartate 197, arginine 202, 264 to 266 (LGI), and 288 to 289 (IY) contribute to the NAD(+) site.

Belongs to the zinc-containing alcohol dehydrogenase family. Homotetramer. The cofactor is Zn(2+).

It is found in the cytoplasm. It carries out the reaction L-threonine + NAD(+) = (2S)-2-amino-3-oxobutanoate + NADH + H(+). Its pathway is amino-acid degradation; L-threonine degradation via oxydo-reductase pathway; glycine from L-threonine: step 1/2. Functionally, catalyzes the NAD(+)-dependent oxidation of L-threonine to 2-amino-3-ketobutyrate. This Vibrio vulnificus (strain CMCP6) protein is L-threonine 3-dehydrogenase.